The sequence spans 176 residues: Methylmalonyl-CoA epimerase, mitochondrial (176 aa).

Residues 1–36 (MARVLKAAAANAVGLFSRLQAPIPTVRASSTSQPLD) constitute a mitochondrion transit peptide. The VOC domain maps to 47-176 (RLNHVAIAVP…GGVLVELEQA (130 aa)). His-50 serves as a coordination point for Co(2+). The residue at position 114 (Lys-114) is an N6-succinyllysine. His-122 is a Co(2+) binding site. Lys-150 bears the N6-acetyllysine; alternate mark. Lys-150 carries the post-translational modification N6-succinyllysine; alternate. Glu-172 serves as a coordination point for Co(2+).

This sequence belongs to the methylmalonyl-CoA epimerase family.

Its subcellular location is the mitochondrion. The enzyme catalyses (R)-methylmalonyl-CoA = (S)-methylmalonyl-CoA. Functionally, methylmalonyl-CoA epimerase involved in propionyl-CoA metabolism. This chain is Methylmalonyl-CoA epimerase, mitochondrial, found in Homo sapiens (Human).